We begin with the raw amino-acid sequence, 241 residues long: Probable 2-phosphosulfolactate phosphatase (241 aa).

Belongs to the ComB family. It depends on Mg(2+) as a cofactor.

It catalyses the reaction (2R)-O-phospho-3-sulfolactate + H2O = (2R)-3-sulfolactate + phosphate. The polypeptide is Probable 2-phosphosulfolactate phosphatase (Microcystis aeruginosa (strain NIES-843 / IAM M-2473)).